Reading from the N-terminus, the 124-residue chain is Large ribosomal subunit protein bL12 (124 aa).

A disordered region spans residues 93–124 (GAPSTVKEGASKDEAEEAKKKLEEAGASVELK). Residues 101–116 (GASKDEAEEAKKKLEE) show a composition bias toward basic and acidic residues.

It belongs to the bacterial ribosomal protein bL12 family. As to quaternary structure, homodimer. Part of the ribosomal stalk of the 50S ribosomal subunit. Forms a multimeric L10(L12)X complex, where L10 forms an elongated spine to which 2 to 4 L12 dimers bind in a sequential fashion. Binds GTP-bound translation factors.

Its function is as follows. Forms part of the ribosomal stalk which helps the ribosome interact with GTP-bound translation factors. Is thus essential for accurate translation. The protein is Large ribosomal subunit protein bL12 of Marinobacter nauticus (strain ATCC 700491 / DSM 11845 / VT8) (Marinobacter aquaeolei).